The primary structure comprises 263 residues: tRNA pseudouridine synthase A (263 aa).

Catalysis depends on Asp-54, which acts as the Nucleophile. Tyr-113 contributes to the substrate binding site.

This sequence belongs to the tRNA pseudouridine synthase TruA family. As to quaternary structure, homodimer.

The enzyme catalyses uridine(38/39/40) in tRNA = pseudouridine(38/39/40) in tRNA. In terms of biological role, formation of pseudouridine at positions 38, 39 and 40 in the anticodon stem and loop of transfer RNAs. In Lactobacillus helveticus (strain DPC 4571), this protein is tRNA pseudouridine synthase A.